The chain runs to 47 residues: Photosystem II reaction center protein K (47 aa).

The propeptide occupies methionine 1–alanine 10. A helical transmembrane segment spans residues leucine 26–phenylalanine 46.

It belongs to the PsbK family. In terms of assembly, PSII is composed of 1 copy each of membrane proteins PsbA, PsbB, PsbC, PsbD, PsbE, PsbF, PsbH, PsbI, PsbJ, PsbK, PsbL, PsbM, PsbT, PsbX, PsbY, Psb30/Ycf12, peripheral proteins PsbO, CyanoQ (PsbQ), PsbU, PsbV and a large number of cofactors. It forms dimeric complexes.

The protein localises to the cellular thylakoid membrane. One of the components of the core complex of photosystem II (PSII). PSII is a light-driven water:plastoquinone oxidoreductase that uses light energy to abstract electrons from H(2)O, generating O(2) and a proton gradient subsequently used for ATP formation. It consists of a core antenna complex that captures photons, and an electron transfer chain that converts photonic excitation into a charge separation. The chain is Photosystem II reaction center protein K from Prochlorococcus marinus (strain NATL2A).